A 1370-amino-acid polypeptide reads, in one-letter code: DNA-directed RNA polymerase subunit beta (1370 aa).

This sequence belongs to the RNA polymerase beta chain family. The RNAP catalytic core consists of 2 alpha, 1 beta, 1 beta' and 1 omega subunit. When a sigma factor is associated with the core the holoenzyme is formed, which can initiate transcription.

The enzyme catalyses RNA(n) + a ribonucleoside 5'-triphosphate = RNA(n+1) + diphosphate. DNA-dependent RNA polymerase catalyzes the transcription of DNA into RNA using the four ribonucleoside triphosphates as substrates. This is DNA-directed RNA polymerase subunit beta from Bordetella pertussis (strain Tohama I / ATCC BAA-589 / NCTC 13251).